A 196-amino-acid polypeptide reads, in one-letter code: Large ribosomal subunit protein mL66 (196 aa).

Residues 1-34 (MAALKALVSGCGRLLRGLLAGPAATSWSRLPARG) constitute a mitochondrion transit peptide.

It belongs to the bacterial ribosomal protein bS18 family. Mitochondrion-specific ribosomal protein mL66 subfamily. Component of the mitochondrial large ribosomal subunit (mt-LSU). Mature mammalian 55S mitochondrial ribosomes consist of a small (28S) and a large (39S) subunit. The 28S small subunit contains a 12S ribosomal RNA (12S mt-rRNA) and 30 different proteins. The 39S large subunit contains a 16S rRNA (16S mt-rRNA), a copy of mitochondrial valine transfer RNA (mt-tRNA(Val)), which plays an integral structural role, and 52 different proteins. mL66 forms a zinc-binding site with uL10m.

It localises to the mitochondrion. This is Large ribosomal subunit protein mL66 (MRPS18A) from Homo sapiens (Human).